Consider the following 713-residue polypeptide: Probable 1-deoxy-D-xylulose-5-phosphate synthase 2, chloroplastic (713 aa).

The N-terminal 30 residues, 1 to 30 (MALQASSSPSMFRAIPTNTNASCRRKLQVR), are a transit peptide targeting the chloroplast. Residues His-140 and 181–183 (GHS) each bind thiamine diphosphate. Asp-212 is a binding site for Mg(2+). Thiamine diphosphate is bound by residues 213–214 (GA), Asn-241, Tyr-362, and Glu-444. Asn-241 contributes to the Mg(2+) binding site.

Belongs to the transketolase family. DXPS subfamily. Homodimer. The cofactor is Mg(2+). Requires thiamine diphosphate as cofactor.

The protein localises to the plastid. Its subcellular location is the chloroplast. The catalysed reaction is D-glyceraldehyde 3-phosphate + pyruvate + H(+) = 1-deoxy-D-xylulose 5-phosphate + CO2. The protein operates within metabolic intermediate biosynthesis; 1-deoxy-D-xylulose 5-phosphate biosynthesis; 1-deoxy-D-xylulose 5-phosphate from D-glyceraldehyde 3-phosphate and pyruvate: step 1/1. In terms of biological role, catalyzes the acyloin condensation reaction between C atoms 2 and 3 of pyruvate and glyceraldehyde 3-phosphate to yield 1-deoxy-D-xylulose-5-phosphate (DXP). Is a limiting enzyme for plastidic isoprenoid biosynthesis and essential for chloroplast development. The polypeptide is Probable 1-deoxy-D-xylulose-5-phosphate synthase 2, chloroplastic (Oryza sativa subsp. japonica (Rice)).